We begin with the raw amino-acid sequence, 282 residues long: Secretory carrier-associated membrane protein 1 (282 aa).

The tract at residues 1-49 is disordered; that stretch reads MSRYQSHSFDDGEINPFANPTSVPAATSKLSPLPPEPYDRGATMDIPLD. Residues 1–117 are Cytoplasmic-facing; it reads MSRYQSHSFD…EIPIHLQRIQ (117 aa). Over residues 18–30 the composition is skewed to polar residues; it reads ANPTSVPAATSKL. At serine 31 the chain carries Phosphoserine. Residues 48–93 are a coiled coil; it reads LDSGKDLKAKEKELREKEAELKRREQEIKRKEDAIAQAGIVIEEKN. Helical transmembrane passes span 118–138, 150–170, 185–205, and 233–253; these read YVAF…IVAV, IWFL…VMWY, FGWF…AAVA, and IFYF…IWVI. Topologically, residues 254 to 282 are cytoplasmic; the sequence is QQVYMYFRGSGKAAEMKQEATRRAMMAAL.

Belongs to the SCAMP family.

The protein resides in the cell membrane. It is found in the cytoplasmic vesicle. It localises to the secretory vesicle membrane. In terms of biological role, probably involved in membrane trafficking. The chain is Secretory carrier-associated membrane protein 1 (SCAMP1) from Arabidopsis thaliana (Mouse-ear cress).